The sequence spans 63 residues: MQHEKSLEFLQIAMKYLPEAKEQLEKSGIELSMEAIQPFMNLFTTVMAEAYELGKSDAKSETE.

Its function is as follows. Negatively regulates the transcription of the comG operon. The polypeptide is ComG operon repressor (comZ) (Bacillus subtilis (strain 168)).